Reading from the N-terminus, the 75-residue chain is Exodeoxyribonuclease 7 small subunit (75 aa).

This sequence belongs to the XseB family. As to quaternary structure, heterooligomer composed of large and small subunits.

Its subcellular location is the cytoplasm. It carries out the reaction Exonucleolytic cleavage in either 5'- to 3'- or 3'- to 5'-direction to yield nucleoside 5'-phosphates.. Bidirectionally degrades single-stranded DNA into large acid-insoluble oligonucleotides, which are then degraded further into small acid-soluble oligonucleotides. This is Exodeoxyribonuclease 7 small subunit from Chlamydia caviae (strain ATCC VR-813 / DSM 19441 / 03DC25 / GPIC) (Chlamydophila caviae).